Reading from the N-terminus, the 676-residue chain is Forkhead box protein biniou (676 aa).

5 disordered regions span residues Tyr22 to Tyr50, Ala131 to Thr160, Gln203 to Ser232, Asn249 to Pro312, and Ile583 to Pro651. Basic residues predominate over residues Pro34–His48. Positions Ser133 to Thr160 are enriched in polar residues. The segment covering Gln203–Gln220 has biased composition (low complexity). The segment covering Pro257–His273 has biased composition (polar residues). The segment at residues Lys311 to Arg408 is a DNA-binding region (fork-head). Positions Ile583–Gln593 are enriched in low complexity. Residues Ala594–Gln611 show a composition bias toward basic residues. Residues Gly612 to Thr625 are compositionally biased toward low complexity. Over residues Gly637–Pro647 the composition is skewed to basic and acidic residues.

In terms of assembly, binds to DNA. In terms of tissue distribution, in embryo, expressed in all types of visceral muscles and their progenitors (at protein level). In late stage 10 embryo, expressed in the caudal visceral mesoderm and trunk and hindgut visceral mesoderm progenitors.

The protein resides in the nucleus. Its function is as follows. Component of a regulatory network controlling visceral mesoderm development and midgut morphogenesis. Transcriptional regulator involved in the activation of a large number of genes in the visceral mesoderm including betaTub60D, dpp and Hand. Binds to and regulates a number of enhancers driving expression in the visceral mesoderm in a temporally and spatially restricted manner. Also to binds to enhancers cooperatively with activators, such as bap or HLH54F, to coregulate expression of shared target genes in the visceral mesoderm. Binds to the Ndg enhancer and drives expression of Ndg in the late visceral musculature. May be involved in the transcriptional regulation of wupA in the visceral mesoderm. Plays an indirect role in the later stages of salivary gland positioning. The protein is Forkhead box protein biniou (bin) of Drosophila melanogaster (Fruit fly).